Reading from the N-terminus, the 2046-residue chain is Protein TIC 214 (2046 aa).

Transmembrane regions (helical) follow at residues 18-38, 54-74, 79-99, 125-145, 163-183, and 214-234; these read VSGP…LPFG, LYGI…FLSM, IYAA…YTFC, ILSL…LLAN, ISFM…FINL, and TFSV…PLIF. Disordered stretches follow at residues 278–299, 320–472, and 1833–1898; these read DEDR…EDRS, ARSV…VPRE, and AKDS…EDEI. 3 stretches are compositionally biased toward basic and acidic residues: residues 322 to 335, 344 to 368, and 378 to 457; these read SVAE…EHRS, SVAE…RSVA, and AKKD…RSVA. A compositionally biased stretch (low complexity) spans 1833 to 1866; sequence AKDSNANDINAKDSNANDINANDSNAKDSNANDI. The span at 1882–1898 shows a compositional bias: basic and acidic residues; the sequence is NAKDSNADVPKKKEDEI.

Belongs to the TIC214 family. Part of the Tic complex.

The protein resides in the plastid. Its subcellular location is the chloroplast inner membrane. Involved in protein precursor import into chloroplasts. May be part of an intermediate translocation complex acting as a protein-conducting channel at the inner envelope. The sequence is that of Protein TIC 214 from Pinus koraiensis (Korean pine).